The chain runs to 102 residues: Small ribosomal subunit protein uS10 (102 aa).

It belongs to the universal ribosomal protein uS10 family. As to quaternary structure, part of the 30S ribosomal subunit.

Involved in the binding of tRNA to the ribosomes. The polypeptide is Small ribosomal subunit protein uS10 (Methanosphaerula palustris (strain ATCC BAA-1556 / DSM 19958 / E1-9c)).